The chain runs to 323 residues: Ankyrin repeat and SOCS box protein 11 (323 aa).

7 ANK repeats span residues 64 to 93 (ADRSPLHEAAAQGRLLALKTLIAQGINVNL), 97 to 126 (NRVSSLHEACLGGHVACAKALLENGAHVNA), 130 to 159 (HGATPLFNACCSGSAACVNVLLEFGAKAQL), 162 to 191 (YLASPIHEAVKRGHRECMEILLTKDVNIEQ), 195 to 224 (QLGTPLYVACTYQRVDCVKKLLELGASVDH), 227 to 256 (WLDTPLHAAVRQSSVEVINLLTVYGANLNL), and 260 to 289 (QGKSALDLAVPKSSVRQALLLHEGPPALSQ). The 51-residue stretch at 273–323 (SVRQALLLHEGPPALSQLCRLCVRKCLGRTCHHAIYALGLPESLEKFLLYQ) folds into the SOCS box domain.

This sequence belongs to the ankyrin SOCS box (ASB) family. As to quaternary structure, substrate-recognition component of the ECS(ASB11) complex, composed of ASB11, CUL5, ELOB, ELOC and RNF7/RBX2.

It is found in the endoplasmic reticulum. Its pathway is protein modification; protein ubiquitination. Functionally, substrate-recognition component of a cullin-5-RING E3 ubiquitin-protein ligase complex (ECS complex, also named CRL5 complex), which mediates the ubiquitination and subsequent proteasomal degradation of target proteins, such as BIK, DIRAS2 and RPN1. The ECS(ASB11) complex acts as a regulator of the endoplasmic reticulum unfolded protein response by mediating ubiquitination and degradation of BIK. The polypeptide is Ankyrin repeat and SOCS box protein 11 (Asb11) (Mus musculus (Mouse)).